Here is an 838-residue protein sequence, read N- to C-terminus: Xyloglucanase (838 aa).

Positions 1 to 19 (MKVSRVLALVLGAVIPAHA) are cleaved as a signal peptide. D53 (nucleophile) is an active-site residue. N-linked (GlcNAc...) asparagine glycans are attached at residues N232 and N436. D469 functions as the Proton donor in the catalytic mechanism. Positions 750–801 (GTGGTSSSTKQSSSSTSSASSSTTLRSSVVSTTRASTVTSSRTSSAAGPTGS) are disordered. Positions 754–797 (TSSSTKQSSSSTSSASSSTTLRSSVVSTTRASTVTSSRTSSAAG) are enriched in low complexity. The CBM1 domain maps to 802–838 (GVAGHYAQCGGIGWTGPTQCVAPYVCQKQNDYYYQCV).

It belongs to the glycosyl hydrolase 74 family.

The catalysed reaction is Hydrolysis of (1-&gt;4)-D-glucosidic linkages in xyloglucans so as to successively remove oligosaccharides from the newly-formed chain end after endo-initiation on a polymer molecule.. Its function is as follows. Hydrolyzes the glucosidic bonds of unbranched Glc residues in tamarind seed xyloglucan, producing XXXG, XLXG, XXLG and XLLG. Has a low activity against beta-glucan and carboxymethylcellulose. Not active against Avicel, laminarin, xylan, galactomannan, linear and branched arabinans, galactan, polygalacturonic acid, starch, beta-D-Glcp, beta-D-cellobiose, beta-D-Galp, beta-D-Xylp, alpha-D-Xylp, alpha-L-Araf and alpha-L-Arap. This is Xyloglucanase from Hypocrea jecorina (strain QM6a) (Trichoderma reesei).